Here is a 361-residue protein sequence, read N- to C-terminus: Tryptophan--tRNA ligase, mitochondrial (361 aa).

A mitochondrion-targeting transit peptide spans 1 to 16 (MAKLPKITSLLPHSRV). ATP is bound by residues glutamine 21 and 27–30 (HIGN). The 'HIGH' region signature appears at 22-30 (PTGIPHIGN). Position 165 (aspartate 165) interacts with L-tryptophan. ATP is bound by residues 177–179 (GKD), 225–229 (KMSKS), and lysine 228. Positions 225–229 (KMSKS) match the 'KMSKS' region motif.

The protein belongs to the class-I aminoacyl-tRNA synthetase family. In terms of assembly, homodimer.

It localises to the mitochondrion matrix. It carries out the reaction tRNA(Trp) + L-tryptophan + ATP = L-tryptophyl-tRNA(Trp) + AMP + diphosphate + H(+). This chain is Tryptophan--tRNA ligase, mitochondrial, found in Schizosaccharomyces pombe (strain 972 / ATCC 24843) (Fission yeast).